The chain runs to 109 residues: MFGKGGIGNLMKQAQQMQEKMQQMQEEVANLEVTGESGAGLVKITINGAHNCRRVEIDPSLMEDDKEMLEDLIAAAFNDAARRIAETQKEKMAAVSSGMQLPPGFKMPF.

The protein belongs to the YbaB/EbfC family. Homodimer.

It localises to the cytoplasm. The protein resides in the nucleoid. In terms of biological role, binds to DNA and alters its conformation. May be involved in regulation of gene expression, nucleoid organization and DNA protection. This is Nucleoid-associated protein PC1_1077 from Pectobacterium carotovorum subsp. carotovorum (strain PC1).